A 479-amino-acid chain; its full sequence is MSIVVKNNIHWVGQRDWEVRDFHGTEYKTLRGSSYNSYLIREEKNVLIDTVDHKFSREFVQNLRNEIDLADIDYIVINHAEEDHAGALTELMAQIPDTPIYCTANAIDSINGHHHHPEWNFNVVKTGDTLDIGNGKQLIFVETPMLHWPDSMMTYLTGDAVLFSNDAFGQHYCDEHLFNDEVDQTELFEQCQRYYANILTPFSRLVTPKITEILGFNLPVDMIATSHGVVWRDNPTQIVELYLKWAADYQEDRITIFYDTMSNNTRMMADAIAQGIAETDPRVAVKIFNVARSDKNEILTNVFRSKGVLVGTSTMNNVMMPKIAGLVEEMTGLRFRNKRASAFGSHGWSGGAVDRLSTRLQDAGFEMSLSLKAKWRPDQDALELCREHGREIARQWALAPLPQSTVNTVVKEETSATTKSDLGPRMQCSVCQWIYDPAKGEPMQDVAPGTPWSEVPDNFLCPECSLGKDVFDELASEAK.

A zinc metallo-hydrolase region spans residues Leu30–Ile210. Fe cation contacts are provided by His79, Glu81, Asp83, His147, Asp166, and His227. Residues Ile254 to Ala393 form the Flavodoxin-like domain. Residues Thr260 to Asn264 and Ala342 to Leu369 each bind FMN. The region spanning Gly423–Leu474 is the Rubredoxin-like domain. The Fe cation site is built by Cys428, Cys431, Cys461, and Cys464.

This sequence in the N-terminal section; belongs to the zinc metallo-hydrolase group 3 family. In terms of assembly, homotetramer. The cofactor is Fe cation. FMN serves as cofactor.

The protein localises to the cytoplasm. The protein operates within nitrogen metabolism; nitric oxide reduction. Functionally, anaerobic nitric oxide reductase; uses NADH to detoxify nitric oxide (NO), protecting several 4Fe-4S NO-sensitive enzymes. Has at least 2 reductase partners, only one of which (NorW, flavorubredoxin reductase) has been identified. NO probably binds to the di-iron center; electrons enter from the NorW at rubredoxin and are transferred sequentially to the FMN center and the di-iron center. Also able to function as an aerobic oxygen reductase. The protein is Anaerobic nitric oxide reductase flavorubredoxin of Shigella sonnei (strain Ss046).